A 304-amino-acid polypeptide reads, in one-letter code: N-acetylmuramic acid 6-phosphate etherase (304 aa).

The region spanning 62–225 (IVEAFQQGGR…TTASMILIGK (164 aa)) is the SIS domain. E90 serves as the catalytic Proton donor. E121 is a catalytic residue.

The protein belongs to the GCKR-like family. MurNAc-6-P etherase subfamily. Homodimer.

The enzyme catalyses N-acetyl-D-muramate 6-phosphate + H2O = N-acetyl-D-glucosamine 6-phosphate + (R)-lactate. It functions in the pathway amino-sugar metabolism; 1,6-anhydro-N-acetylmuramate degradation. It participates in amino-sugar metabolism; N-acetylmuramate degradation. Its pathway is cell wall biogenesis; peptidoglycan recycling. In terms of biological role, specifically catalyzes the cleavage of the D-lactyl ether substituent of MurNAc 6-phosphate, producing GlcNAc 6-phosphate and D-lactate. Together with AnmK, is also required for the utilization of anhydro-N-acetylmuramic acid (anhMurNAc) either imported from the medium or derived from its own cell wall murein, and thus plays a role in cell wall recycling. In Glaesserella parasuis serovar 5 (strain SH0165) (Haemophilus parasuis), this protein is N-acetylmuramic acid 6-phosphate etherase.